The sequence spans 315 residues: Methionyl-tRNA formyltransferase (315 aa).

The tract at residues 2–189 (SESLRIIFAG…LITTLKQLAD (188 aa)) is N-terminal domain. 113-116 (SLLP) serves as a coordination point for (6S)-5,6,7,8-tetrahydrofolate. A C-terminal domain region spans residues 210–315 (KEEARIDWSL…EWFVPGNRLV (106 aa)).

It belongs to the Fmt family.

The enzyme catalyses L-methionyl-tRNA(fMet) + (6R)-10-formyltetrahydrofolate = N-formyl-L-methionyl-tRNA(fMet) + (6S)-5,6,7,8-tetrahydrofolate + H(+). Attaches a formyl group to the free amino group of methionyl-tRNA(fMet). The formyl group appears to play a dual role in the initiator identity of N-formylmethionyl-tRNA by promoting its recognition by IF2 and preventing the misappropriation of this tRNA by the elongation apparatus. The protein is Methionyl-tRNA formyltransferase of Escherichia coli O157:H7.